Consider the following 215-residue polypeptide: Coat protein (215 aa).

The segment at 1-34 is disordered; that stretch reads MATQNADVTDATDYKKPPAETEQKALTIQPRSNK. Basic and acidic residues predominate over residues 12-23; that stretch reads TDYKKPPAETEQ. Residues 24–34 are compositionally biased toward polar residues; sequence KALTIQPRSNK.

The protein belongs to the potexvirus capsid protein family.

Its subcellular location is the virion. Required for genome encapsidation. Forms ribonucleoprotein complexes along with TGB1 helicase and viral RNA. This chain is Coat protein, found in Setaria italica (Foxtail millet).